Consider the following 246-residue polypeptide: E3 ubiquitin-protein ligase RNF182 (246 aa).

The segment at 22 to 70 (CKICYNRYNLRQRKPKVLGCCHRVCAKCLYKLVDCGESPQCVIVCPFCR) adopts an RING-type zinc-finger fold. Transmembrane regions (helical) follow at residues 184–204 (VFVW…IYLL) and 211–231 (LGVV…IYGF).

As to quaternary structure, interacts with ATP6V0C.

Its subcellular location is the membrane. The protein resides in the cytoplasm. It carries out the reaction S-ubiquitinyl-[E2 ubiquitin-conjugating enzyme]-L-cysteine + [acceptor protein]-L-lysine = [E2 ubiquitin-conjugating enzyme]-L-cysteine + N(6)-ubiquitinyl-[acceptor protein]-L-lysine.. Its pathway is protein modification; protein ubiquitination. E3 ubiquitin-protein ligase that mediates the ubiquitination of atp6v0c and targets it to degradation via the ubiquitin-proteasome pathway. This is E3 ubiquitin-protein ligase RNF182 (rnf182) from Xenopus laevis (African clawed frog).